The primary structure comprises 267 residues: RWD domain-containing protein 3 (267 aa).

One can recognise an RWD domain in the interval 7–114 (QELSALAAIF…LWIQQNLRLV (108 aa)). Interaction with UBE2I/UBC9 stretches follow at residues 13 to 15 (AAI) and 100 to 102 (VHE).

Interacts with UBE2I/UBC9, NFKBIA, HIF1A and NCOA2.

It localises to the nucleus. The protein resides in the cytoplasm. Enhancer of SUMO conjugation. Via its interaction with UBE2I/UBC9, increases SUMO conjugation to proteins by promoting the binding of E1 and E2 enzymes, thioester linkage between SUMO and UBE2I/UBC9 and transfer of SUMO to specific target proteins which include HIF1A, PIAS, NFKBIA, NR3C1 and TOP1. Positively regulates the NF-kappa-B signaling pathway by enhancing the sumoylation of NF-kappa-B inhibitor alpha (NFKBIA), promoting its stabilization which consequently leads to an increased inhibition of NF-kappa-B transcriptional activity. Negatively regulates the hypoxia-inducible factor-1 alpha (HIF1A) signaling pathway by increasing the sumoylation of HIF1A, promoting its stabilization, transcriptional activity and the expression of its target gene VEGFA during hypoxia. Has no effect on ubiquitination. In Mus musculus (Mouse), this protein is RWD domain-containing protein 3 (Rwdd3).